Reading from the N-terminus, the 1040-residue chain is Multidrug resistance protein MdtB (1040 aa).

A run of 12 helical transmembrane segments spans residues 16-36 (FILRPVATTLLMVAILLAGII), 347-367 (LMLAIALVVMIIYLFLRNIPA), 369-389 (IIPAVAVPLSLVGTFAVMVFL), 396-416 (LTLMALTIATGFVVDDAIVVI), 440-460 (IGFTIISLTFSLIAVLIPLLF), 472-492 (FAVTLAVAILISAVVSLTLTP), 537-557 (WLTLGVALGTLALTVLLWIFI), 863-883 (LGSTLWLILASVVAMYIVLGV), 888-908 (FIHPITILSTLPTAGVGALLA), 911-931 (IAGAELDVIAIIGIILLIGIV), 968-988 (ILMTTLAALLGALPLMLSTGV), and 998-1018 (IGMVGGLLVSQVLTLFTTPVI).

Belongs to the resistance-nodulation-cell division (RND) (TC 2.A.6) family. MdtB subfamily. In terms of assembly, part of a tripartite efflux system composed of MdtA, MdtB and MdtC. MdtB forms a heteromultimer with MdtC.

Its subcellular location is the cell inner membrane. This Cronobacter sakazakii (strain ATCC BAA-894) (Enterobacter sakazakii) protein is Multidrug resistance protein MdtB.